Reading from the N-terminus, the 167-residue chain is Putative 4-hydroxy-4-methyl-2-oxoglutarate aldolase (167 aa).

Residues 81–84 (GDII) and Arg-103 contribute to the substrate site. Asp-104 contributes to the a divalent metal cation binding site.

It belongs to the class II aldolase/RraA-like family. As to quaternary structure, homotrimer. A divalent metal cation serves as cofactor.

It catalyses the reaction 4-hydroxy-4-methyl-2-oxoglutarate = 2 pyruvate. It carries out the reaction oxaloacetate + H(+) = pyruvate + CO2. Catalyzes the aldol cleavage of 4-hydroxy-4-methyl-2-oxoglutarate (HMG) into 2 molecules of pyruvate. Also contains a secondary oxaloacetate (OAA) decarboxylase activity due to the common pyruvate enolate transition state formed following C-C bond cleavage in the retro-aldol and decarboxylation reactions. This chain is Putative 4-hydroxy-4-methyl-2-oxoglutarate aldolase, found in Corynebacterium jeikeium (strain K411).